Here is a 277-residue protein sequence, read N- to C-terminus: MAMLSFEKKYRVRGGTLIGGDLFDFWVGPFYVGIFGVMTVFFALIGIALIAWNTALGPTWNLWQISVNPPDAKYGLGFAPLAEGGIWQWVSICATGAFVTWALREVEICRKLGIGFHVPFAFSFAIFAYVTLVVIRPVLMGSWSYGFPYGIFTHLDWVSNTGYSYGQFHYNPAHMIAITFFFTTCLALALHGGLVLSALNPDRGEPVKSPEHENTVFRDLVGYSIGTIGIHRLGLFLALSAVFFSAVCMIISGPVLAEGGSWPDWWNWWRNLPIWNP.

Helical transmembrane passes span 30 to 52, 84 to 106, and 113 to 135; these read FYVG…LIAW, GGIW…LREV, and GIGF…LVVI. (7R,8Z)-bacteriochlorophyll b contacts are provided by histidine 154 and histidine 174. Residues 173–195 form a helical membrane-spanning segment; it reads AHMIAITFFFTTCLALALHGGLV. Histidine 191 provides a ligand contact to Fe cation. Phenylalanine 217 serves as a coordination point for a ubiquinone. Histidine 231 is a Fe cation binding site. The chain crosses the membrane as a helical span at residues 233–255; the sequence is LGLFLALSAVFFSAVCMIISGPV.

It belongs to the reaction center PufL/M/PsbA/D family. Reaction center is composed of four bacteriochlorophylls, two bacteriopheophytins, two ubiquinones, one iron, and three highly hydrophobic polypeptide chains (designated L, M, and H).

The protein localises to the cellular chromatophore membrane. Its function is as follows. The reaction center is a membrane-bound complex that mediates the initial photochemical event in the electron transfer process of photosynthesis. The chain is Reaction center protein L chain (pufL) from Rhodopseudomonas palustris (strain ATCC BAA-98 / CGA009).